The chain runs to 397 residues: Phosphoglycerate kinase (397 aa).

Substrate-binding positions include 21-23 (DFN), R36, 59-62 (HLGR), R118, and R151. ATP-binding positions include K202, G293, E324, and 353 to 356 (GGDS).

Belongs to the phosphoglycerate kinase family. As to quaternary structure, monomer.

It localises to the cytoplasm. The catalysed reaction is (2R)-3-phosphoglycerate + ATP = (2R)-3-phospho-glyceroyl phosphate + ADP. Its pathway is carbohydrate degradation; glycolysis; pyruvate from D-glyceraldehyde 3-phosphate: step 2/5. This chain is Phosphoglycerate kinase, found in Chloroherpeton thalassium (strain ATCC 35110 / GB-78).